We begin with the raw amino-acid sequence, 571 residues long: Streptolysin O (571 aa).

The signal sequence occupies residues 1–33 (MSNKKTFKKYSRVAGLLTAALIIGNLVTANAES). The interval 30-108 (NAESNKQNTA…KKSEEDHTEE (79 aa)) is disordered. A compositionally biased stretch (low complexity) spans 37 to 48 (NTASTETTTTNE). Composition is skewed to basic and acidic residues over residues 50–68 (PKPE…KTDD) and 79–108 (APKE…HTEE). The next 4 membrane-spanning stretches (beta stranded) occupy residues 260–273 (KSQI…NSKI), 280–289 (IDFKSISKGE), 358–367 (SNDVEAAFSA), and 375–387 (KTNG…LENS). The short motif at 529–539 (ECTGLAWEWWR) is the Conserved undecapeptide element. The Cholesterol binding motif lies at 561–562 (TL).

Belongs to the cholesterol-dependent cytolysin family. Homooligomeric pore complex of 35 to 50 subunits; when inserted in the host membrane.

The protein resides in the secreted. Its subcellular location is the host cell membrane. A cholesterol-dependent toxin that causes cytolysis by forming pores in cholesterol containing host membranes. After binding to target membranes, the protein undergoes a major conformation change, leading to its insertion in the host membrane and formation of an oligomeric pore complex. Cholesterol is required for binding to host membranes, membrane insertion and pore formation; cholesterol binding is mediated by a Thr-Leu pair in the C-terminus. Can be reversibly inactivated by oxidation. The chain is Streptolysin O (slo) from Streptococcus pyogenes serotype M18 (strain MGAS8232).